We begin with the raw amino-acid sequence, 383 residues long: Peroxisomal membrane protein PEX15 (383 aa).

The Cytoplasmic portion of the chain corresponds to 1-331; sequence MAASEIMNNL…AVLKHHFTRS (331 aa). Residues 332–349 form a helical membrane-spanning segment; sequence VLNKNGLLLTGLLLLLCL. The Lumenal portion of the chain corresponds to 350-383; that stretch reads KKYKSLMAIFKHVPAAFHTVYPQIVGLLKLLASI.

As to quaternary structure, interacts with PEX6. Interacts with PEX19; targets PEX15 to the peroxisome. Phosphorylated.

Its subcellular location is the peroxisome membrane. The protein resides in the endoplasmic reticulum membrane. In terms of biological role, peroxisomal docking factor that anchors PEX1 and PEX6 to peroxisome membranes. PEX26 is therefore required for the formation of the PEX1-PEX6 AAA ATPase complex, a complex that mediates the extraction of the PEX5 receptor from peroxisomal membrane. This chain is Peroxisomal membrane protein PEX15 (PEX15), found in Saccharomyces cerevisiae (strain ATCC 204508 / S288c) (Baker's yeast).